Here is a 562-residue protein sequence, read N- to C-terminus: NAD-dependent malic enzyme (562 aa).

Y101 acts as the Proton donor in catalysis. R154 contributes to the NAD(+) binding site. K172 acts as the Proton acceptor in catalysis. A divalent metal cation is bound by residues E243, D244, and D267. Residues D267 and N415 each coordinate NAD(+).

Belongs to the malic enzymes family. As to quaternary structure, homotetramer. It depends on Mg(2+) as a cofactor. Mn(2+) serves as cofactor.

The enzyme catalyses (S)-malate + NAD(+) = pyruvate + CO2 + NADH. It catalyses the reaction oxaloacetate + H(+) = pyruvate + CO2. The sequence is that of NAD-dependent malic enzyme from Vibrio parahaemolyticus serotype O3:K6 (strain RIMD 2210633).